The sequence spans 441 residues: 23S rRNA (uracil(1939)-C(5))-methyltransferase RlmD (441 aa).

Positions 10-68 (KPLKQQSLVLDITAMDHHGRGIAKHNNKVCFVSNALPNEQVKATIIADKARYSEAQTHK) constitute a TRAM domain. The [4Fe-4S] cluster site is built by Cys-81, Cys-87, Cys-90, and Cys-169. 6 residues coordinate S-adenosyl-L-methionine: Gln-274, Phe-303, Asn-308, Glu-324, Asp-351, and Asp-372. The active-site Nucleophile is Cys-398.

It belongs to the class I-like SAM-binding methyltransferase superfamily. RNA M5U methyltransferase family. RlmD subfamily.

The enzyme catalyses uridine(1939) in 23S rRNA + S-adenosyl-L-methionine = 5-methyluridine(1939) in 23S rRNA + S-adenosyl-L-homocysteine + H(+). In terms of biological role, catalyzes the formation of 5-methyl-uridine at position 1939 (m5U1939) in 23S rRNA. In Pseudoalteromonas translucida (strain TAC 125), this protein is 23S rRNA (uracil(1939)-C(5))-methyltransferase RlmD.